The chain runs to 643 residues: MSLKMDNRDVAGKANRWFGMAQPKSGKMNMNILHQEELIAQKKREIEARMEQKARQSHVPSPQPPHPGEIADAHNSCISNKFANDGSFLQQFLKLQKAQTSTDSAPRAPPSMPTPSSLKKPLVLSKRTGLGLSSPTGPVKNYSHAKQLPVAHRPSVFQSPDDDEEEDYEQWLEIKVSPPEGAETRRVIEKLARFVAEGGPELEKVAMEDYKDNPAFTFLHDKNSREFLYYRRKVAEIRKEAQKPQAATQKVSPPEDEEAKNLAEKLARFIADGGPEVETIALQNNRENQAFSFLYDPNSQGYRYYRQKLDEFRKAKAGSTGSFPAPAPNPSLRRKSAPEALSGAVPPITACPTPVAPAPAVNPTPSIPGKPTATAAVKRKRKSRWGPEEDKVELPPAELAQRDIDASPSPLSVQDLKGLGYEKGKPVGLVGVTELSDAQKKQLKEQQEMQQMYDMIMQHKRAMQDMQLLWEKALQQHQHGYDSDEEVDSELGTWEHQLRRMEMDKTREWAEQLTQMGRGKHFIGDFLPPDELEKFMETFKALKEGREPDYSEYKEFKLTVENIGYQMLMKMGWKEGEGLGTEGQGIKNPVNKGATTIDGAGFGIDRPAELSKEDDEYEAFRKRMMLAYRFRPNPLNNPRRPYY.

Disordered regions lie at residues 48–69 (ARME…HPGE) and 97–119 (KAQT…SSLK). Thr128 carries the phosphothreonine modification. The stretch at 187 to 229 (VIEKLARFVAEGGPELEKVAMEDYKDNPAFTFLHDKNSREFLY) is one SURP motif 1 repeat. Ser252 is subject to Phosphoserine. Residues 262 to 305 (LAEKLARFIADGGPEVETIALQNNRENQAFSFLYDPNSQGYRYY) form an SURP motif 2 repeat. 2 disordered regions span residues 316 to 335 (KAGS…LRRK) and 360 to 393 (AVNP…DKVE). Ser322 bears the Phosphoserine mark. Positions 378-384 (KRKRKSR) match the Nuclear localization signal motif. 4 positions are modified to phosphoserine: Ser407, Ser409, Ser412, and Ser483. The G-patch domain occupies 560–607 (VENIGYQMLMKMGWKEGEGLGTEGQGIKNPVNKGATTIDGAGFGIDRP).

In terms of assembly, component of the spliceosome.

It localises to the nucleus. Plays a role in pre-mRNA splicing. This Mus musculus (Mouse) protein is SURP and G-patch domain-containing protein 1 (Sugp1).